We begin with the raw amino-acid sequence, 254 residues long: 3-deoxy-manno-octulosonate cytidylyltransferase (254 aa).

It belongs to the KdsB family.

It localises to the cytoplasm. It carries out the reaction 3-deoxy-alpha-D-manno-oct-2-ulosonate + CTP = CMP-3-deoxy-beta-D-manno-octulosonate + diphosphate. Its pathway is nucleotide-sugar biosynthesis; CMP-3-deoxy-D-manno-octulosonate biosynthesis; CMP-3-deoxy-D-manno-octulosonate from 3-deoxy-D-manno-octulosonate and CTP: step 1/1. It participates in bacterial outer membrane biogenesis; lipopolysaccharide biosynthesis. Its function is as follows. Activates KDO (a required 8-carbon sugar) for incorporation into bacterial lipopolysaccharide in Gram-negative bacteria. The protein is 3-deoxy-manno-octulosonate cytidylyltransferase of Bordetella petrii (strain ATCC BAA-461 / DSM 12804 / CCUG 43448).